Here is an 88-residue protein sequence, read N- to C-terminus: Small ribosomal subunit protein bS20 (88 aa).

The protein belongs to the bacterial ribosomal protein bS20 family.

Functionally, binds directly to 16S ribosomal RNA. The sequence is that of Small ribosomal subunit protein bS20 from Legionella pneumophila (strain Paris).